Here is a 370-residue protein sequence, read N- to C-terminus: Phenylalanine dehydrogenase (370 aa).

Residue Arg44 coordinates NAD(+). Lys68 contributes to the L-phenylalanine binding site. Lys80 serves as the catalytic Proton donor/acceptor. 114-115 (TD) serves as a coordination point for L-phenylalanine. NAD(+)-binding positions include Asp115, Ser146, Thr150, 180–186 (GLGKVGF), 203–204 (DV), 243–244 (AI), and 264–266 (AAN). Asn266 contributes to the L-phenylalanine binding site.

It belongs to the Glu/Leu/Phe/Val dehydrogenases family.

It catalyses the reaction L-phenylalanine + NAD(+) + H2O = 3-phenylpyruvate + NH4(+) + NADH + H(+). It participates in amino-acid biosynthesis; L-phenylalanine biosynthesis; L-phenylalanine from phenylpyruvate (PDH route): step 1/1. In terms of biological role, catalyzes the reversible NAD(+)-dependent oxidative deamination of L-phenylalanine to phenylpyruvate. This is Phenylalanine dehydrogenase from Caldalkalibacillus thermarum (strain TA2.A1).